A 101-amino-acid chain; its full sequence is NADH-ubiquinone oxidoreductase chain 5 (101 aa).

The next 3 helical transmembrane spans lie at 12–32 (IALFTVFIIDIIKFYILSGVI), 48–68 (FLFITMGFLFFIFTTWYFICF), and 79–99 (LVIYFRYNLKYCLFFCMLFII).

Belongs to the complex I subunit 5 family.

Its subcellular location is the mitochondrion inner membrane. The catalysed reaction is a ubiquinone + NADH + 5 H(+)(in) = a ubiquinol + NAD(+) + 4 H(+)(out). In terms of biological role, core subunit of the mitochondrial membrane respiratory chain NADH dehydrogenase (Complex I) that is believed to belong to the minimal assembly required for catalysis. Complex I functions in the transfer of electrons from NADH to the respiratory chain. The immediate electron acceptor for the enzyme is believed to be ubiquinone. The polypeptide is NADH-ubiquinone oxidoreductase chain 5 (ND5) (Leishmania tarentolae (Sauroleishmania tarentolae)).